A 311-amino-acid chain; its full sequence is Formimidoylglutamase (311 aa).

Mn(2+)-binding residues include histidine 130, aspartate 155, histidine 157, aspartate 159, cysteine 242, and aspartate 244.

The protein belongs to the arginase family. Requires Mn(2+) as cofactor.

It catalyses the reaction N-formimidoyl-L-glutamate + H2O = formamide + L-glutamate. It functions in the pathway amino-acid degradation; L-histidine degradation into L-glutamate; L-glutamate from N-formimidoyl-L-glutamate (hydrolase route): step 1/1. Its function is as follows. Catalyzes the conversion of N-formimidoyl-L-glutamate to L-glutamate and formamide. The polypeptide is Formimidoylglutamase (Staphylococcus aureus (strain bovine RF122 / ET3-1)).